We begin with the raw amino-acid sequence, 734 residues long: Photosystem I P700 chlorophyll a apoprotein A2 (734 aa).

Transmembrane regions (helical) follow at residues 46–69 (IFAS…FHVA), 135–158 (LYTG…LHLQ), 175–199 (LNHH…HVAI), 273–291 (IAHH…GHMY), 330–353 (IHFQ…QHMY), 369–395 (AALY…IFFI), 417–439 (AIKS…LYVH), and 517–535 (FLVH…LILV). The [4Fe-4S] cluster site is built by C559 and C568. 2 helical membrane-spanning segments follow: residues 575–596 (AFYL…YWHW) and 643–665 (LSVW…MFLI). Chlorophyll a is bound by residues H654, M662, and Y670. W671 is a binding site for phylloquinone. Residues 707 to 727 (LVGLAHFSVGYIFTYAAFLIA) form a helical membrane-spanning segment.

Belongs to the PsaA/PsaB family. In terms of assembly, the PsaA/B heterodimer binds the P700 chlorophyll special pair and subsequent electron acceptors. PSI consists of a core antenna complex that captures photons, and an electron transfer chain that converts photonic excitation into a charge separation. The eukaryotic PSI reaction center is composed of at least 11 subunits. It depends on P700 is a chlorophyll a/chlorophyll a' dimer, A0 is one or more chlorophyll a, A1 is one or both phylloquinones and FX is a shared 4Fe-4S iron-sulfur center. as a cofactor.

It localises to the plastid. Its subcellular location is the chloroplast thylakoid membrane. The catalysed reaction is reduced [plastocyanin] + hnu + oxidized [2Fe-2S]-[ferredoxin] = oxidized [plastocyanin] + reduced [2Fe-2S]-[ferredoxin]. In terms of biological role, psaA and PsaB bind P700, the primary electron donor of photosystem I (PSI), as well as the electron acceptors A0, A1 and FX. PSI is a plastocyanin-ferredoxin oxidoreductase, converting photonic excitation into a charge separation, which transfers an electron from the donor P700 chlorophyll pair to the spectroscopically characterized acceptors A0, A1, FX, FA and FB in turn. Oxidized P700 is reduced on the lumenal side of the thylakoid membrane by plastocyanin. The protein is Photosystem I P700 chlorophyll a apoprotein A2 of Drimys granadensis.